A 249-amino-acid polypeptide reads, in one-letter code: T-cell immunoreceptor with Ig and ITIM domains (249 aa).

Positions 1–28 are cleaved as a signal peptide; the sequence is MHGWLLLVWVQGLIQAAFLATAIGATAG. One can recognise an Ig-like V-type domain in the interval 29-127; that stretch reads TIDTKRNISA…GGIYKGRIFL (99 aa). Residues 29 to 148 are Extracellular-facing; it reads TIDTKRNISA…LAQFQTAPLG (120 aa). The tract at residues 35-45 is homodimerization; the sequence is NISAEEGGSVI. Cys-48 and Cys-111 are oxidised to a cystine. The N-linked (GlcNAc...) asparagine glycan is linked to Asn-104. A helical membrane pass occupies residues 149 to 169; sequence GTMAAVLGLICLMVTGVTVLA. Over 170–249 the chain is Cytoplasmic; it reads RKDKSIRMHS…ESFIAVSKTG (80 aa). The segment at 182-222 is disordered; the sequence is SGLGRTEAEPQEWNLRSLSSPGSPVQTQTAPAGPCGEQAED. Over residues 195-211 the composition is skewed to polar residues; it reads NLRSLSSPGSPVQTQTA. An ITIM motif motif is present at residues 234 to 239; sequence LSYRSL.

As to quaternary structure, homodimer in cis; binds with high affinity to PVR, forming a heterotetrameric assembly of two TIGIT and two PVR molecules. Binds with lower affinity to NECTIN2 and NECTIN3. Interacts with GRB2. Interacts with NECTIN4.

It localises to the cell membrane. Inhibitory receptor that plays a role in the modulation of immune responses. Suppresses T-cell activation by promoting the generation of mature immunoregulatory dendritic cells. Upon binding to its ligands PVR/CD155 or NECTIN2/CD112, which are expressed on antigen-presenting cells, sends inhibitory signals to the T-cell or NK cell. Mechanistically, interaction with ligand leads to phosphorylation of the cytoplasmic tail by Src family tyrosine kinases such as FYN or LCK, allowing subsequent binding to adapter GRB2 and SHIP1/INPP5D. In turn, inhibits PI3K and MAPK signaling cascades. In addition, associates with beta-arrestin-2/ARRB2 to recruit SHIP1/INPP5D that suppresses autoubiquitination of TRAF6 and subsequently inhibits NF-kappa-B signaling pathway. Also acts as a receptor for NECTIN4 to inhibit NK cell cytotoxicity. This is T-cell immunoreceptor with Ig and ITIM domains from Mus musculus (Mouse).